Reading from the N-terminus, the 134-residue chain is Probable histone H2A.3 (134 aa).

This sequence belongs to the histone H2A family. The nucleosome is a histone octamer containing two molecules each of H2A, H2B, H3 and H4 assembled in one H3-H4 heterotetramer and two H2A-H2B heterodimers. The octamer wraps approximately 147 bp of DNA.

The protein localises to the nucleus. It localises to the chromosome. Core component of nucleosome. Nucleosomes wrap and compact DNA into chromatin, limiting DNA accessibility to the cellular machineries which require DNA as a template. Histones thereby play a central role in transcription regulation, DNA repair, DNA replication and chromosomal stability. DNA accessibility is regulated via a complex set of post-translational modifications of histones, also called histone code, and nucleosome remodeling. The polypeptide is Probable histone H2A.3 (Oryza sativa subsp. indica (Rice)).